The following is a 282-amino-acid chain: Pantothenate synthetase (282 aa).

Residue 30-37 coordinates ATP; the sequence is MGYLHQGH. Residue His-37 is the Proton donor of the active site. Gln-61 is a (R)-pantoate binding site. Position 61 (Gln-61) interacts with beta-alanine. 147-150 contacts ATP; that stretch reads GQKD. Gln-153 is a binding site for (R)-pantoate. Residues Val-176 and 184–187 contribute to the ATP site; that span reads MSSR.

This sequence belongs to the pantothenate synthetase family. As to quaternary structure, homodimer.

Its subcellular location is the cytoplasm. The enzyme catalyses (R)-pantoate + beta-alanine + ATP = (R)-pantothenate + AMP + diphosphate + H(+). Its pathway is cofactor biosynthesis; (R)-pantothenate biosynthesis; (R)-pantothenate from (R)-pantoate and beta-alanine: step 1/1. Catalyzes the condensation of pantoate with beta-alanine in an ATP-dependent reaction via a pantoyl-adenylate intermediate. The polypeptide is Pantothenate synthetase (Geotalea daltonii (strain DSM 22248 / JCM 15807 / FRC-32) (Geobacter daltonii)).